The chain runs to 148 residues: Ubiquitin conjugating enzyme E2 B (148 aa).

A UBC core domain is found at 2–148; that stretch reads AAHKRLQKEI…AKEWTKKYAK (147 aa). Residue cysteine 87 is the Glycyl thioester intermediate of the active site.

This sequence belongs to the ubiquitin-conjugating enzyme family. In terms of assembly, interacts with mkkA (via F-box/WD40 repeat domains).

The enzyme catalyses S-ubiquitinyl-[E1 ubiquitin-activating enzyme]-L-cysteine + [E2 ubiquitin-conjugating enzyme]-L-cysteine = [E1 ubiquitin-activating enzyme]-L-cysteine + S-ubiquitinyl-[E2 ubiquitin-conjugating enzyme]-L-cysteine.. The protein operates within protein modification; protein ubiquitination. Functionally, involved in protein ubiquitination and degradation during development. Mediates protein ubiquitination at the mound and finger stage required for subsequent development and may be an essential component of the developmental transition between the induction of postaggregative gene expression and subsequent cell-type differentiation and morphogenesis. ubcB and ubpB differentially control ubiquitination/deubiquitination and degradation of mkkA protein in a cell-type-specific and temporally regulated manner. This chain is Ubiquitin conjugating enzyme E2 B (ubcB), found in Dictyostelium discoideum (Social amoeba).